A 137-amino-acid polypeptide reads, in one-letter code: Small heat shock protein IbpA (137 aa).

The region spanning 28 to 137 is the sHSP domain; it reads SQSNGGYPPY…AKKPRRIEIN (110 aa).

The protein belongs to the small heat shock protein (HSP20) family. As to quaternary structure, monomer. Forms homomultimers of about 100-150 subunits at optimal growth temperatures. Conformation changes to monomers at high temperatures or high ionic concentrations.

It is found in the cytoplasm. In terms of biological role, associates with aggregated proteins, together with IbpB, to stabilize and protect them from irreversible denaturation and extensive proteolysis during heat shock and oxidative stress. Aggregated proteins bound to the IbpAB complex are more efficiently refolded and reactivated by the ATP-dependent chaperone systems ClpB and DnaK/DnaJ/GrpE. Its activity is ATP-independent. The sequence is that of Small heat shock protein IbpA from Shigella sonnei (strain Ss046).